A 183-amino-acid chain; its full sequence is Endoribonuclease YbeY (183 aa).

Zn(2+) is bound by residues His140, His144, and His150.

Belongs to the endoribonuclease YbeY family. Zn(2+) serves as cofactor.

It localises to the cytoplasm. Single strand-specific metallo-endoribonuclease involved in late-stage 70S ribosome quality control and in maturation of the 3' terminus of the 16S rRNA. The protein is Endoribonuclease YbeY of Bradyrhizobium diazoefficiens (strain JCM 10833 / BCRC 13528 / IAM 13628 / NBRC 14792 / USDA 110).